A 361-amino-acid chain; its full sequence is Mitogen-activated protein kinase 14 (361 aa).

The region spanning 25–309 (YQNLTPVGSG…AAEALAHSYF (285 aa)) is the Protein kinase domain. ATP is bound by residues 31 to 39 (VGSGAYGSV) and Lys54. Asp151 serves as the catalytic Proton acceptor. Thr181 bears the Phosphothreonine mark. A TXY motif is present at residues 181–183 (TGY). Phosphotyrosine is present on Tyr183.

This sequence belongs to the protein kinase superfamily. CMGC Ser/Thr protein kinase family. MAP kinase subfamily. Mg(2+) serves as cofactor. Post-translationally, dually phosphorylated on Thr-181 and Tyr-183, which activates the enzyme.

It catalyses the reaction L-seryl-[protein] + ATP = O-phospho-L-seryl-[protein] + ADP + H(+). The catalysed reaction is L-threonyl-[protein] + ATP = O-phospho-L-threonyl-[protein] + ADP + H(+). Activated by tyrosine and threonine phosphorylation. Functionally, serine/threonine kinase which acts as an essential component of the MAP kinase signal transduction pathway. mapk14a is one of the four p38 MAPKs which play an important role in the cascades of cellular responses evoked by extracellular stimuli such as pro-inflammatory cytokines or physical stress leading to direct activation of transcription factors. Accordingly, p38 MAPKs phosphorylate a broad range of proteins and it has been estimated that they may have approximately 200 to 300 substrates each. Some of the targets are downstream kinases which are activated through phosphorylation and further phosphorylate additional targets. MPK2 is activated by upstream MAPKK/MAPKKK and stimulates MAPKAP kinase 2 to phosphorylate small heat shock proteins. Does not phosphorylate myelin basic protein or MAPKAP kinase 1. The sequence is that of Mitogen-activated protein kinase 14 (mapk14) from Xenopus laevis (African clawed frog).